The chain runs to 466 residues: 3-isopropylmalate dehydratase large subunit (466 aa).

[4Fe-4S] cluster is bound by residues cysteine 349, cysteine 410, and cysteine 413.

It belongs to the aconitase/IPM isomerase family. LeuC type 1 subfamily. As to quaternary structure, heterodimer of LeuC and LeuD. Requires [4Fe-4S] cluster as cofactor.

It catalyses the reaction (2R,3S)-3-isopropylmalate = (2S)-2-isopropylmalate. It participates in amino-acid biosynthesis; L-leucine biosynthesis; L-leucine from 3-methyl-2-oxobutanoate: step 2/4. Catalyzes the isomerization between 2-isopropylmalate and 3-isopropylmalate, via the formation of 2-isopropylmaleate. This Vesicomyosocius okutanii subsp. Calyptogena okutanii (strain HA) protein is 3-isopropylmalate dehydratase large subunit.